The sequence spans 242 residues: Probable transcriptional regulatory protein XCC3027 (242 aa).

The protein belongs to the TACO1 family.

The protein localises to the cytoplasm. The chain is Probable transcriptional regulatory protein XCC3027 from Xanthomonas campestris pv. campestris (strain ATCC 33913 / DSM 3586 / NCPPB 528 / LMG 568 / P 25).